A 316-amino-acid polypeptide reads, in one-letter code: MGKLIRRTSLTSKIINLPIDYFIYVCEQFDSVEWDKVSDRYSIPFSLAVNFIFLLMRIYIKSTHVPVQRNQLFVDKQSINTSRSWFRAFLSFLSICFLFISFLNFIFSTRFQNKLYRTLPQDKRTTTSTPNVKPVFQHSNNDDGDEQVFELKVWSPNQFLLNFACLFSPAHALILWFYSTSLRVTLLTFLLSFTTLHFVNKFSLLLKDQQYLHRQVFFEYDKKFVEPRLSVVKRDVAINTTRGPTTASIEYFTPRKPIDTFLEHRSSSHDHLTSTPRTPIALQRRSVHHLHDSGISRDSSSPFKRFPHLSDGSSRF.

4 consecutive transmembrane segments (helical) span residues 41–61 (YSIP…IYIK), 88–108 (AFLS…FIFS), 159–179 (FLLN…WFYS), and 186–206 (LLTF…SLLL). The tract at residues 291 to 316 (HDSGISRDSSSPFKRFPHLSDGSSRF) is disordered.

The protein localises to the endoplasmic reticulum membrane. Functionally, has a role in meiosis. This Schizosaccharomyces pombe (strain 972 / ATCC 24843) (Fission yeast) protein is Meiotically up-regulated gene 154 protein (mug154).